Reading from the N-terminus, the 92-residue chain is Small ribosomal subunit protein bS20 (92 aa).

This sequence belongs to the bacterial ribosomal protein bS20 family.

Its function is as follows. Binds directly to 16S ribosomal RNA. This is Small ribosomal subunit protein bS20 from Methylacidiphilum infernorum (isolate V4) (Methylokorus infernorum (strain V4)).